We begin with the raw amino-acid sequence, 465 residues long: ATP synthase subunit beta (465 aa).

Residue 152-159 (GGAGVGKT) participates in ATP binding.

This sequence belongs to the ATPase alpha/beta chains family. In terms of assembly, F-type ATPases have 2 components, CF(1) - the catalytic core - and CF(0) - the membrane proton channel. CF(1) has five subunits: alpha(3), beta(3), gamma(1), delta(1), epsilon(1). CF(0) has three main subunits: a(1), b(2) and c(9-12). The alpha and beta chains form an alternating ring which encloses part of the gamma chain. CF(1) is attached to CF(0) by a central stalk formed by the gamma and epsilon chains, while a peripheral stalk is formed by the delta and b chains.

The protein localises to the cell inner membrane. It carries out the reaction ATP + H2O + 4 H(+)(in) = ADP + phosphate + 5 H(+)(out). Functionally, produces ATP from ADP in the presence of a proton gradient across the membrane. The catalytic sites are hosted primarily by the beta subunits. This is ATP synthase subunit beta from Campylobacter fetus subsp. fetus (strain 82-40).